A 121-amino-acid polypeptide reads, in one-letter code: Basic phospholipase A2 homolog textilotoxin B chain (121 aa).

Cystine bridges form between cysteine 11/cysteine 72, cysteine 27/cysteine 120, cysteine 29/cysteine 45, cysteine 44/cysteine 101, cysteine 51/cysteine 94, cysteine 61/cysteine 87, and cysteine 80/cysteine 92.

It belongs to the phospholipase A2 family. Group I subfamily. N49 sub-subfamily. As to quaternary structure, heterohexamer. 2 forms exist: 2 A or 2 B chains, 2 C chains and 2 covalently-linked D chains, and 1 A or 1 B, 1 C, 2 covalently-linked D chains and 2 differentially glycosylated covalently-linked D chains. Textilotoxin was originally described as pentameric. As to expression, expressed by the venom gland.

It localises to the secreted. Its function is as follows. Snake venom oligomeric phospholipase A2 that has potent presynaptic neurotoxicity. Chain B is not itself neurotoxic, but it is essential for the neurotoxicity of textilotoxin. Subunit B possesses a very low phospholipase activity. This chain is Basic phospholipase A2 homolog textilotoxin B chain, found in Pseudonaja textilis (Eastern brown snake).